The following is a 461-amino-acid chain: Asparagine--tRNA ligase (461 aa).

Belongs to the class-II aminoacyl-tRNA synthetase family. Homodimer.

Its subcellular location is the cytoplasm. The catalysed reaction is tRNA(Asn) + L-asparagine + ATP = L-asparaginyl-tRNA(Asn) + AMP + diphosphate + H(+). In Geobacter metallireducens (strain ATCC 53774 / DSM 7210 / GS-15), this protein is Asparagine--tRNA ligase.